The primary structure comprises 325 residues: Solute carrier family 35 member B1 (325 aa).

8 helical membrane passes run 18–38 (PVCF…QESI), 54–74 (FALS…KLLI), 88–108 (WLYA…NSAL), 139–159 (YPLA…LFMY), 171–191 (IFGY…LTGV), 213–233 (LWST…WEFL), 246–266 (ILLF…TVVY), and 288–308 (VILF…LVFL). A Di-lysine motif motif is present at residues 321-325 (KKTSH).

Belongs to the nucleotide-sugar transporter family. SLC35B subfamily.

It is found in the endoplasmic reticulum membrane. Its function is as follows. Probable sugar transporter. The chain is Solute carrier family 35 member B1 (SLC35B1) from Gallus gallus (Chicken).